The primary structure comprises 160 residues: MKNNADYIEMKVPAQPEYVGIIRLTLSGVASRMGYTYDEIEDLKIAVSEACTNAVQHAYKEDKNGEVSIRFGVFEDRLEVIVADEGDSFDFDQKQQDLGPYTPSHTVDQLSEGGLGLYLMETLMDEVRVQNHSGVTVAMTKYLNGERVDHDTTIKNYETN.

In terms of assembly, homodimer. In stressed cells, forms a complex with RsbV. The predominant form of this complex has a stoichiometry of 2:2 (one dimer of RsbW is bound by two monomers of RsbV). In unstressed cells, forms a 2:1 complex with sigma-B.

It carries out the reaction L-seryl-[protein] + ATP = O-phospho-L-seryl-[protein] + ADP + H(+). The catalysed reaction is L-threonyl-[protein] + ATP = O-phospho-L-threonyl-[protein] + ADP + H(+). The higher affinity of RsbW for RsbV than for sigma-B, rather than a difference in the concentrations of RsbV and sigma-B, is the driving force that is responsible for the switch of RsbW to non-phosphorylated RsbV. The kinase activity of RsbW is directly regulated by changes in the ATP/ADP ratio. Functionally, negative regulator of sigma-B activity. Phosphorylates and inactivates its specific antagonist protein, RsbV. Upon phosphorylation of RsbV, RsbW is released and binds to sigma-B, thereby blocking its ability to form an RNA polymerase holoenzyme (E-sigma-B). The chain is Serine-protein kinase RsbW (rsbW) from Bacillus subtilis (strain 168).